The sequence spans 148 residues: Macrodomain Ter protein (148 aa).

Belongs to the MatP family. In terms of assembly, homodimer.

Its subcellular location is the cytoplasm. Required for spatial organization of the terminus region of the chromosome (Ter macrodomain) during the cell cycle. Prevents early segregation of duplicated Ter macrodomains during cell division. Binds specifically to matS, which is a 13 bp signature motif repeated within the Ter macrodomain. This chain is Macrodomain Ter protein, found in Haemophilus influenzae (strain 86-028NP).